Here is a 615-residue protein sequence, read N- to C-terminus: Chromosomal replication initiator protein DnaA (615 aa).

The segment at 1–88 is domain I, interacts with DnaA modulators; that stretch reads MSEGQINLAM…RVAVTVDPSA (88 aa). The segment at 85–272 is disordered; that stretch reads DPSAVPPSAP…PTSGGPDQLN (188 aa). Residues 88 to 269 are domain II; sequence AVPPSAPTEE…STNPTSGGPD (182 aa). Composition is skewed to low complexity over residues 94–112 and 173–190; these read PTEEASSTSSPDSSHPAPD and PSSADPGSPASPAPVAES. The segment at 270–486 is domain III, AAA+ region; that stretch reads QLNPKYTFDT…GALIRVTAFA (217 aa). The ATP site is built by glycine 314, glycine 316, lysine 317, and threonine 318. The tract at residues 487-615 is domain IV, binds dsDNA; the sequence is SLNRQSVDLH…QQAHHNHHHL (129 aa).

The protein belongs to the DnaA family. Oligomerizes as a right-handed, spiral filament on DNA at oriC.

Its subcellular location is the cytoplasm. Functionally, plays an essential role in the initiation and regulation of chromosomal replication. ATP-DnaA binds to the origin of replication (oriC) to initiate formation of the DNA replication initiation complex once per cell cycle. Binds the DnaA box (a 9 base pair repeat at the origin) and separates the double-stranded (ds)DNA. Forms a right-handed helical filament on oriC DNA; dsDNA binds to the exterior of the filament while single-stranded (ss)DNA is stabiized in the filament's interior. The ATP-DnaA-oriC complex binds and stabilizes one strand of the AT-rich DNA unwinding element (DUE), permitting loading of DNA polymerase. After initiation quickly degrades to an ADP-DnaA complex that is not apt for DNA replication. Binds acidic phospholipids. The chain is Chromosomal replication initiator protein DnaA from Thermobifida fusca (strain YX).